The chain runs to 136 residues: Large ribosomal subunit protein bL20 (136 aa).

It belongs to the bacterial ribosomal protein bL20 family.

Its function is as follows. Binds directly to 23S ribosomal RNA and is necessary for the in vitro assembly process of the 50S ribosomal subunit. It is not involved in the protein synthesizing functions of that subunit. This Tropheryma whipplei (strain Twist) (Whipple's bacillus) protein is Large ribosomal subunit protein bL20.